The primary structure comprises 321 residues: Glucokinase (321 aa).

Position 8–13 (G8–T13) interacts with ATP.

The protein belongs to the bacterial glucokinase family.

The protein resides in the cytoplasm. It carries out the reaction D-glucose + ATP = D-glucose 6-phosphate + ADP + H(+). The protein is Glucokinase of Klebsiella pneumoniae subsp. pneumoniae (strain ATCC 700721 / MGH 78578).